A 726-amino-acid polypeptide reads, in one-letter code: Catalase-peroxidase (726 aa).

The segment at residues 98–226 is a cross-link (tryptophyl-tyrosyl-methioninium (Trp-Tyr) (with M-252)); that stretch reads WHSAGTYRMQ…LAAVHMGLIY (129 aa). Catalysis depends on histidine 99, which acts as the Proton acceptor. The segment at residues 226–252 is a cross-link (tryptophyl-tyrosyl-methioninium (Tyr-Met) (with W-98)); sequence YVNPEGVNGQPDPARTAQHVRETFARM. Residue histidine 267 participates in heme b binding.

The protein belongs to the peroxidase family. Peroxidase/catalase subfamily. Homodimer or homotetramer. Heme b is required as a cofactor. Formation of the three residue Trp-Tyr-Met cross-link is important for the catalase, but not the peroxidase activity of the enzyme.

The catalysed reaction is H2O2 + AH2 = A + 2 H2O. It carries out the reaction 2 H2O2 = O2 + 2 H2O. Its function is as follows. Bifunctional enzyme with both catalase and broad-spectrum peroxidase activity. The sequence is that of Catalase-peroxidase from Roseobacter denitrificans (strain ATCC 33942 / OCh 114) (Erythrobacter sp. (strain OCh 114)).